Consider the following 290-residue polypeptide: Undecaprenyl-diphosphatase (290 aa).

8 consecutive transmembrane segments (helical) span residues 1–21 (MALW…FLPV), 49–69 (MILF…VVFW), 101–121 (LFWL…TLKA), 126–146 (VFAS…LLWW), 160–180 (INLK…MPGL), 203–223 (YSFF…AIEV), 232–252 (VGFS…IISL), and 266–286 (VFSF…IDLA).

The protein belongs to the UppP family.

It is found in the cell inner membrane. It carries out the reaction di-trans,octa-cis-undecaprenyl diphosphate + H2O = di-trans,octa-cis-undecaprenyl phosphate + phosphate + H(+). Functionally, catalyzes the dephosphorylation of undecaprenyl diphosphate (UPP). Confers resistance to bacitracin. This chain is Undecaprenyl-diphosphatase, found in Alkalilimnicola ehrlichii (strain ATCC BAA-1101 / DSM 17681 / MLHE-1).